A 64-amino-acid chain; its full sequence is Large ribosomal subunit protein bL35 (64 aa).

Residues 1–15 show a composition bias toward basic residues; sequence MPKNKTHSGASKRFR. Residues 1 to 20 are disordered; that stretch reads MPKNKTHSGASKRFRVTGSG.

This sequence belongs to the bacterial ribosomal protein bL35 family.

The sequence is that of Large ribosomal subunit protein bL35 from Nocardioides sp. (strain ATCC BAA-499 / JS614).